A 37-amino-acid chain; its full sequence is Large ribosomal subunit protein bL36 (37 aa).

Belongs to the bacterial ribosomal protein bL36 family.

The protein is Large ribosomal subunit protein bL36 of Leptospira interrogans serogroup Icterohaemorrhagiae serovar copenhageni (strain Fiocruz L1-130).